Here is a 367-residue protein sequence, read N- to C-terminus: tRNA(Ile)-lysidine synthase (367 aa).

32–37 (SGGSDS) contributes to the ATP binding site.

The protein belongs to the tRNA(Ile)-lysidine synthase family.

It is found in the cytoplasm. It carries out the reaction cytidine(34) in tRNA(Ile2) + L-lysine + ATP = lysidine(34) in tRNA(Ile2) + AMP + diphosphate + H(+). Ligates lysine onto the cytidine present at position 34 of the AUA codon-specific tRNA(Ile) that contains the anticodon CAU, in an ATP-dependent manner. Cytidine is converted to lysidine, thus changing the amino acid specificity of the tRNA from methionine to isoleucine. This chain is tRNA(Ile)-lysidine synthase, found in Hyphomonas neptunium (strain ATCC 15444).